Here is a 163-residue protein sequence, read N- to C-terminus: Phosphopantetheine adenylyltransferase (163 aa).

Residue Thr11 participates in substrate binding. ATP contacts are provided by residues 11–12 (TF) and His19. Lys43, Leu75, and Arg89 together coordinate substrate. Residues 90–92 (GLR), Glu100, and 125–131 (YSFISST) contribute to the ATP site.

The protein belongs to the bacterial CoaD family. Homohexamer. It depends on Mg(2+) as a cofactor.

The protein localises to the cytoplasm. The catalysed reaction is (R)-4'-phosphopantetheine + ATP + H(+) = 3'-dephospho-CoA + diphosphate. It participates in cofactor biosynthesis; coenzyme A biosynthesis; CoA from (R)-pantothenate: step 4/5. Reversibly transfers an adenylyl group from ATP to 4'-phosphopantetheine, yielding dephospho-CoA (dPCoA) and pyrophosphate. The sequence is that of Phosphopantetheine adenylyltransferase from Acinetobacter baumannii (strain ACICU).